We begin with the raw amino-acid sequence, 898 residues long: Neutral alpha-glucosidase C (898 aa).

Residues 154-173 form a disordered region; the sequence is QRATKGNGQNTPAATSQENQ. Residues 157–171 show a composition bias toward polar residues; that stretch reads TKGNGQNTPAATSQE. D495 functions as the Nucleophile in the catalytic mechanism. Residue E498 is part of the active site. D571 functions as the Proton donor in the catalytic mechanism.

The protein belongs to the glycosyl hydrolase 31 family.

It carries out the reaction Hydrolysis of terminal, non-reducing (1-&gt;4)-linked alpha-D-glucose residues with release of alpha-D-glucose.. Its function is as follows. Has alpha-glucosidase activity. In Mus musculus (Mouse), this protein is Neutral alpha-glucosidase C (Ganc).